The primary structure comprises 279 residues: Thymidylate synthase (279 aa).

Arg21 contacts dUMP. His51 is a binding site for (6R)-5,10-methylene-5,6,7,8-tetrahydrofolate. 126-127 (RR) contacts dUMP. The active-site Nucleophile is Cys159. DUMP is bound by residues 179–182 (RSAD), Asn190, and 220–222 (HLY). Asp182 is a binding site for (6R)-5,10-methylene-5,6,7,8-tetrahydrofolate. Residue Ala278 coordinates (6R)-5,10-methylene-5,6,7,8-tetrahydrofolate.

This sequence belongs to the thymidylate synthase family. Bacterial-type ThyA subfamily. Homodimer.

Its subcellular location is the cytoplasm. It catalyses the reaction dUMP + (6R)-5,10-methylene-5,6,7,8-tetrahydrofolate = 7,8-dihydrofolate + dTMP. Its pathway is pyrimidine metabolism; dTTP biosynthesis. Catalyzes the reductive methylation of 2'-deoxyuridine-5'-monophosphate (dUMP) to 2'-deoxythymidine-5'-monophosphate (dTMP) while utilizing 5,10-methylenetetrahydrofolate (mTHF) as the methyl donor and reductant in the reaction, yielding dihydrofolate (DHF) as a by-product. This enzymatic reaction provides an intracellular de novo source of dTMP, an essential precursor for DNA biosynthesis. In Marinobacter nauticus (strain ATCC 700491 / DSM 11845 / VT8) (Marinobacter aquaeolei), this protein is Thymidylate synthase.